A 347-amino-acid polypeptide reads, in one-letter code: UPF0284 protein YN1551_0030 (347 aa).

Belongs to the UPF0284 family.

The polypeptide is UPF0284 protein YN1551_0030 (Saccharolobus islandicus (strain Y.N.15.51 / Yellowstone #2) (Sulfolobus islandicus)).